The sequence spans 320 residues: Biotin synthase (320 aa).

The Radical SAM core domain occupies Asn-46 to Arg-275. [4Fe-4S] cluster contacts are provided by Cys-64, Cys-68, and Cys-71. The [2Fe-2S] cluster site is built by Ser-108, Cys-140, Cys-200, and Arg-270.

The protein belongs to the radical SAM superfamily. Biotin synthase family. In terms of assembly, homodimer. The cofactor is [4Fe-4S] cluster. Requires [2Fe-2S] cluster as cofactor.

It catalyses the reaction (4R,5S)-dethiobiotin + (sulfur carrier)-SH + 2 reduced [2Fe-2S]-[ferredoxin] + 2 S-adenosyl-L-methionine = (sulfur carrier)-H + biotin + 2 5'-deoxyadenosine + 2 L-methionine + 2 oxidized [2Fe-2S]-[ferredoxin]. The protein operates within cofactor biosynthesis; biotin biosynthesis; biotin from 7,8-diaminononanoate: step 2/2. Functionally, catalyzes the conversion of dethiobiotin (DTB) to biotin by the insertion of a sulfur atom into dethiobiotin via a radical-based mechanism. In Acetivibrio thermocellus (strain ATCC 27405 / DSM 1237 / JCM 9322 / NBRC 103400 / NCIMB 10682 / NRRL B-4536 / VPI 7372) (Clostridium thermocellum), this protein is Biotin synthase.